The following is a 500-amino-acid chain: Glycerol kinase (500 aa).

Residue threonine 12 participates in ADP binding. 3 residues coordinate ATP: threonine 12, threonine 13, and serine 14. A sn-glycerol 3-phosphate-binding site is contributed by threonine 12. Arginine 16 is a binding site for ADP. Positions 82, 83, 135, and 245 each coordinate sn-glycerol 3-phosphate. Positions 82, 83, 135, 245, and 246 each coordinate glycerol. Positions 267 and 310 each coordinate ADP. ATP contacts are provided by threonine 267, glycine 310, glutamine 314, and glycine 411. ADP contacts are provided by glycine 411 and asparagine 415.

Belongs to the FGGY kinase family. Homotetramer and homodimer (in equilibrium).

The catalysed reaction is glycerol + ATP = sn-glycerol 3-phosphate + ADP + H(+). The protein operates within polyol metabolism; glycerol degradation via glycerol kinase pathway; sn-glycerol 3-phosphate from glycerol: step 1/1. Its activity is regulated as follows. Activated by phosphorylation and inhibited by fructose 1,6-bisphosphate (FBP). Its function is as follows. Key enzyme in the regulation of glycerol uptake and metabolism. Catalyzes the phosphorylation of glycerol to yield sn-glycerol 3-phosphate. The protein is Glycerol kinase of Clostridium perfringens (strain ATCC 13124 / DSM 756 / JCM 1290 / NCIMB 6125 / NCTC 8237 / Type A).